The following is a 1088-amino-acid chain: RNA-directed RNA polymerase (1088 aa).

One can recognise a RdRp catalytic domain in the interval 501–687 (LSYGDVTRFL…AKRYIAGGKI (187 aa)).

It belongs to the reoviridae RNA-directed RNA polymerase family. Interacts with VP3 (Potential). Interacts with VP2; this interaction activates VP1. Interacts with NSP5; this interaction is probably necessary for the formation of functional virus factories. Interacts with NSP2; this interaction is weak. The cofactor is Mg(2+).

Its subcellular location is the virion. It catalyses the reaction RNA(n) + a ribonucleoside 5'-triphosphate = RNA(n+1) + diphosphate. Functionally, RNA-directed RNA polymerase that is involved in both transcription and genome replication. Together with VP3 capping enzyme, forms an enzyme complex positioned near the channels situated at each of the five-fold vertices of the core. Following infection, the outermost layer of the virus is lost, leaving a double-layered particle (DLP) made up of the core and VP6 shell. VP1 then catalyzes the transcription of fully conservative plus-strand genomic RNAs that are extruded through the DLP's channels into the cytoplasm where they function as mRNAs for translation of viral proteins. One copy of each of the viral (+)RNAs is also recruited during core assembly, together with newly synthesized polymerase complexes and VP2. The polymerase of these novo-formed particles catalyzes the synthesis of complementary minus-strands leading to dsRNA formation. To do so, the polymerase specifically recognizes and binds 4 bases 5'-UGUG-3' in the conserved 3'-sequence of plus-strand RNA templates. VP2 presumably activates the autoinhibited VP1-RNA complex to coordinate packaging and genome replication. Once dsRNA synthesis is complete, the polymerase switches to the transcriptional mode, thus providing secondary transcription. This is RNA-directed RNA polymerase from Rotavirus A (strain RVA/Human/United States/Wa/1974/G1P1A[8]) (RV-A).